Here is a 243-residue protein sequence, read N- to C-terminus: Peptidyl-tRNA hydrolase (243 aa).

TRNA is bound at residue Y14. The active-site Proton acceptor is H19. F64, N66, and N112 together coordinate tRNA. A disordered region spans residues 188–243 (GGKAEEEKPRKDNKTTEKKPAGQSHIHQARNHNQPKVLTTGPMADILKKMFGNKGE). Over residues 190 to 207 (KAEEEKPRKDNKTTEKKP) the composition is skewed to basic and acidic residues.

It belongs to the PTH family. In terms of assembly, monomer.

Its subcellular location is the cytoplasm. It carries out the reaction an N-acyl-L-alpha-aminoacyl-tRNA + H2O = an N-acyl-L-amino acid + a tRNA + H(+). In terms of biological role, hydrolyzes ribosome-free peptidyl-tRNAs (with 1 or more amino acids incorporated), which drop off the ribosome during protein synthesis, or as a result of ribosome stalling. Its function is as follows. Catalyzes the release of premature peptidyl moieties from peptidyl-tRNA molecules trapped in stalled 50S ribosomal subunits, and thus maintains levels of free tRNAs and 50S ribosomes. The chain is Peptidyl-tRNA hydrolase from Rhizobium leguminosarum bv. trifolii (strain WSM2304).